A 504-amino-acid polypeptide reads, in one-letter code: Aromatic and large neutral amino acid transporter 5-3 (504 aa).

Residues 1–24 (MESTEATMVERKAESPSSGDRARS) are disordered. Positions 8 to 24 (MVERKAESPSSGDRARS) are enriched in basic and acidic residues. The next 6 membrane-spanning stretches (helical) occupy residues 76–96 (YVVL…FMNW), 138–158 (HLFT…GIML), 165–185 (FGAL…GFSS), 206–226 (FFPC…IIAV), 233–253 (ISFI…GATF), and 256–276 (VMLG…LFII). An N-linked (GlcNAc...) asparagine glycan is attached at asparagine 310. 6 helical membrane passes run 324–344 (LSFL…LFFA), 356–376 (EANQ…GGIA), 381–401 (IVPV…LMLI), 406–426 (CFAA…SFLV), 436–456 (IFYP…GGII), and 475–495 (MTVL…FMYV).

Belongs to the SLC43A transporter (TC 2.A.1.44) family.

The protein resides in the cell membrane. It catalyses the reaction L-tyrosine(in) = L-tyrosine(out). With respect to regulation, L-tyrosine uptake is stimulated in trans by aromatic and large neutral amino acids, but not smaller or charged amino acids. Functionally, L-tyrosine transporter that is essential for parasite survival and virulence. May also act as an aromatic and large neutral amino acid transporter. Does not cotransport other charged ions. Involved in amino acid homeostasis by facilitating the net uptake of L-tyrosine and maintaining intracellular pools of aromatic and large neutral amino acids through exchange. The sequence is that of Aromatic and large neutral amino acid transporter 5-3 from Toxoplasma gondii.